Reading from the N-terminus, the 413-residue chain is Hemocyanin type 2 unit e (413 aa).

The N-linked (GlcNAc...) (high mannose) asparagine glycan is linked to N17. H49 is a binding site for Cu cation. An intrachain disulfide couples C55 to C66. A cross-link (2'-(S-cysteinyl)-histidine (Cys-His)) is located at residues 67 to 69 (CVH). The Cu cation site is built by H69 and H78. N-linked (GlcNAc...) (high mannose) asparagine glycosylation occurs at N127. 2 disulfide bridges follow: C179–C246 and C336–C342. H189, H193, and H220 together coordinate Cu cation.

It belongs to the tyrosinase family. Hemocyanin subfamily. In terms of assembly, decamers of large identical subunits, each containing 8 globular oxygen-binding functional units. Cu(2+) is required as a cofactor. In terms of tissue distribution, hemolymph.

It is found in the secreted. Its subcellular location is the extracellular space. Its function is as follows. Hemocyanins are copper-containing oxygen carriers occurring freely dissolved in the hemolymph of many mollusks and arthropods. This Rapana venosa (Veined rapa whelk) protein is Hemocyanin type 2 unit e.